The chain runs to 291 residues: MIQIFFLGTGAGSPSKKRKLPAFLVRREGLNILLDCGEGTQYTLMNNKLGINSIKIIGITHMHGDHVFGLLGVIASMGLLDRKETLYILGPRDLKDFLYTSFEYSKFNPSFKIEFIDNYNDQNITIATFKTCHTVESQGYLISERDRVKIDEEKLEKEKIKDWRVMRKLKEGKTVEYNGKFLKPEDYLVIKRGLKVAYTGDTIPCQSVIESVKGADLLIHDSTFLNEPSAFTYGHSNVADAAKVALEASVKLLALTHISPRYEDVTEHLKVARRIFPKSILPDDLSYITLK.

Positions 61, 63, 65, 66, 133, 201, and 257 each coordinate Zn(2+). Aspartate 65 serves as the catalytic Proton acceptor.

Belongs to the RNase Z family. In terms of assembly, homodimer. Zn(2+) serves as cofactor.

It carries out the reaction Endonucleolytic cleavage of RNA, removing extra 3' nucleotides from tRNA precursor, generating 3' termini of tRNAs. A 3'-hydroxy group is left at the tRNA terminus and a 5'-phosphoryl group is left at the trailer molecule.. Zinc phosphodiesterase, which displays some tRNA 3'-processing endonuclease activity. Probably involved in tRNA maturation, by removing a 3'-trailer from precursor tRNA. The protein is Ribonuclease Z of Saccharolobus islandicus (strain L.S.2.15 / Lassen #1) (Sulfolobus islandicus).